The chain runs to 549 residues: TBC1 domain family member 3 (549 aa).

A Rab-GAP TBC domain is found at 101–293 (GMPMNIRGPM…RLWDVYLVEG (193 aa)). 2 S-palmitoyl cysteine lipidation sites follow: cysteine 318 and cysteine 325. Residues 350–419 (LTRKKGDLPP…PRSSTPCPGG (70 aa)) form a disordered region. Over residues 398–417 (PRPIWSASPPRAPRSSTPCP) the composition is skewed to low complexity.

Ubiquitinated by a CUL7-based E3 ligase, which leads to proteasomal degradation. In terms of processing, palmitoylation is required for membrane localization and protects TBC1D3 from ubiquitination. Expressed in liver, skeletal muscle, kidney, pancreas, spleen, testis, ovary, small intestine and peripheral blood leukocytes. Overexpressed in prostate cancers.

Its subcellular location is the cell membrane. Its function is as follows. Acts as a GTPase activating protein for RAB5. Does not act on RAB4 or RAB11. The protein is TBC1 domain family member 3 (TBC1D3) of Homo sapiens (Human).